A 156-amino-acid polypeptide reads, in one-letter code: Succinate dehydrogenase assembly factor 2-B, mitochondrial (156 aa).

A mitochondrion-targeting transit peptide spans 1 to 24; sequence MLRQLIVSTVGRRMPLQMISQSRL.

The protein belongs to the SDHAF2 family. As to quaternary structure, interacts with the flavoprotein subunit within the SDH catalytic dimer.

Its subcellular location is the mitochondrion matrix. Its function is as follows. Plays an essential role in the assembly of succinate dehydrogenase (SDH), an enzyme complex (also referred to as respiratory complex II) that is a component of both the tricarboxylic acid (TCA) cycle and the mitochondrial electron transport chain, and which couples the oxidation of succinate to fumarate with the reduction of ubiquinone (coenzyme Q) to ubiquinol. Required for flavinylation (covalent attachment of FAD) of the flavoprotein subunit of the SDH catalytic dimer. The polypeptide is Succinate dehydrogenase assembly factor 2-B, mitochondrial (Drosophila erecta (Fruit fly)).